A 280-amino-acid polypeptide reads, in one-letter code: NLP effector protein Pc553546 (280 aa).

The N-terminal stretch at 1-19 (MNLVAALVLCFALLSSVRG) is a signal peptide. Positions 123–129 (AGRHDWA) match the Hepta-peptide GHRHDWE motif motif. N-linked (GlcNAc...) asparagine glycosylation is found at N142 and N209.

Belongs to the Necrosis inducing protein (NPP1) family.

Its subcellular location is the secreted. Secreted effector that contributes strongly to virulence during infection by P.capsici. This is NLP effector protein Pc553546 from Phytophthora capsici.